The following is a 185-amino-acid chain: Ribosome-recycling factor (185 aa).

This sequence belongs to the RRF family.

The protein localises to the cytoplasm. In terms of biological role, responsible for the release of ribosomes from messenger RNA at the termination of protein biosynthesis. May increase the efficiency of translation by recycling ribosomes from one round of translation to another. This is Ribosome-recycling factor from Shewanella frigidimarina (strain NCIMB 400).